Reading from the N-terminus, the 460-residue chain is A-type ATP synthase subunit B (460 aa).

Belongs to the ATPase alpha/beta chains family. Has multiple subunits, A(3), B(3), C, D, E, F, G, I and K(x); there may be a few other subunits as well.

Its subcellular location is the cell membrane. Component of the A-type ATP synthase that produces ATP from ADP in the presence of a proton gradient across the membrane. The B chain is a regulatory subunit. This chain is A-type ATP synthase subunit B, found in Methanosarcina mazei (strain ATCC BAA-159 / DSM 3647 / Goe1 / Go1 / JCM 11833 / OCM 88) (Methanosarcina frisia).